Consider the following 471-residue polypeptide: Indole-3-acetate beta-glucosyltransferase (471 aa).

H15 (proton acceptor) is an active-site residue. Residue H15 participates in an anthocyanidin binding. D107 (charge relay) is an active-site residue. UDP-alpha-D-glucose is bound by residues T129, Q344, H359, W362, N363, S364, E367, D383, and Q384.

The protein belongs to the UDP-glycosyltransferase family.

It carries out the reaction (indol-3-yl)acetate + UDP-alpha-D-glucose = 1-O-(indol-3-ylacetyl)-beta-D-glucose + UDP. It functions in the pathway plant hormone metabolism; auxin conjugation. In Zea mays (Maize), this protein is Indole-3-acetate beta-glucosyltransferase (IAGLU).